We begin with the raw amino-acid sequence, 72 residues long: DNA-directed RNA polymerase subunit omega (72 aa).

It belongs to the RNA polymerase subunit omega family. In terms of assembly, the RNAP catalytic core consists of 2 alpha, 1 beta, 1 beta' and 1 omega subunit. When a sigma factor is associated with the core the holoenzyme is formed, which can initiate transcription.

The enzyme catalyses RNA(n) + a ribonucleoside 5'-triphosphate = RNA(n+1) + diphosphate. Promotes RNA polymerase assembly. Latches the N- and C-terminal regions of the beta' subunit thereby facilitating its interaction with the beta and alpha subunits. The chain is DNA-directed RNA polymerase subunit omega from Francisella tularensis subsp. holarctica (strain LVS).